The following is a 401-amino-acid chain: Argininosuccinate synthase (401 aa).

Residue 9 to 17 participates in ATP binding; the sequence is AYSGGLDTS. Tyrosine 86 contributes to the L-citrulline binding site. Glycine 116 provides a ligand contact to ATP. L-aspartate-binding residues include threonine 118, asparagine 122, and aspartate 123. L-citrulline is bound at residue asparagine 122. 5 residues coordinate L-citrulline: arginine 126, serine 174, serine 183, glutamate 259, and tyrosine 271.

Belongs to the argininosuccinate synthase family. Type 1 subfamily. As to quaternary structure, homotetramer.

Its subcellular location is the cytoplasm. It carries out the reaction L-citrulline + L-aspartate + ATP = 2-(N(omega)-L-arginino)succinate + AMP + diphosphate + H(+). It participates in amino-acid biosynthesis; L-arginine biosynthesis; L-arginine from L-ornithine and carbamoyl phosphate: step 2/3. This Bacillus thuringiensis (strain Al Hakam) protein is Argininosuccinate synthase.